The chain runs to 828 residues: Chitin synthase 7 (828 aa).

The next 6 helical transmembrane spans lie at 17–37 (VIVGLVMLAAVLEWFLWVAAF), 57–77 (AVVVAILFVGFRAVFLPIMVV), 95–115 (VGLQWFAFWAFAGLLTIPWLF), 444–464 (FMQNTIRTTALLFFIMVLAIL), 473–493 (LPVGFIAISLGLNWLMMIYFG), and 501–521 (IWLYPLMFVLNPFFNWWYMVY). Asn615 carries an N-linked (GlcNAc...) asparagine glycan. 2 stretches are compositionally biased toward low complexity: residues 740–752 (SLVSLGSSASNSN) and 813–822 (SNNDPNNSNS). Disordered stretches follow at residues 740–780 (SLVS…LGRA) and 793–828 (LEIGTSHGSSANRPALSRQASNNDPNNSNSGGHQQR). N-linked (GlcNAc...) asparagine glycosylation is present at Asn818.

It belongs to the chitin synthase family. Class VII subfamily.

It is found in the membrane. It carries out the reaction [(1-&gt;4)-N-acetyl-beta-D-glucosaminyl](n) + UDP-N-acetyl-alpha-D-glucosamine = [(1-&gt;4)-N-acetyl-beta-D-glucosaminyl](n+1) + UDP + H(+). In terms of biological role, polymerizes chitin, a structural polymer of the cell wall and septum, by transferring the sugar moiety of UDP-GlcNAc to the non-reducing end of the growing chitin polymer. Required for normal appressorial chitin content and for the normal formation and function of these infection structures. This Pyricularia oryzae (strain 70-15 / ATCC MYA-4617 / FGSC 8958) (Rice blast fungus) protein is Chitin synthase 7.